The primary structure comprises 430 residues: Nucleoporin NUP42 (430 aa).

The segment at 1-68 (MSAFGNPFTS…AFGMPQFGTN (68 aa)) is disordered. The SXFG 1 repeat unit spans residues 2–5 (SAFG). Over residues 15–36 (NLSNTSGINPFTNNAASTNNMG) the composition is skewed to polar residues. SAFGXPXFG repeat units lie at residues 38-46 (SAFGRPSFG) and 58-66 (SAFGMPQFG). Residues 45 to 68 (FGTANTMTGGTTTSAFGMPQFGTN) are compositionally biased toward low complexity. One copy of the SXFG 2 repeat lies at 78–81 (SAFG). SAFGXPXFG repeat units follow at residues 90-98 (SAFGAPAFG) and 112-120 (SAFGAPSFG). Positions 121-230 (STGFGAMAAT…QNTSTSSGTG (110 aa)) are interactions with CRM1 and GFD1. FG repeat units follow at residues 124–125 (FG) and 134–135 (FG). Ser-137 is subject to Phosphoserine. The stretch at 143-151 (SAFGQPAFG) is one SAFGXPXFG 5 repeat. SXFG repeat units follow at residues 168 to 171 (SAFG) and 182 to 185 (SPFG). Residues 180-294 (TTSPFGSLQQ…QSPFSGGSGG (115 aa)) form a disordered region. The span at 186 to 201 (SLQQNASQNASSTSSA) shows a compositional bias: low complexity. The stretch at 200-208 (SAFGKPTFG) is one SAFGXPXFG 6 repeat. Residues 209–230 (AATNTQSPFGTIQNTSTSSGTG) are compositionally biased toward polar residues. 2 SXFG repeats span residues 215–218 (SPFG) and 232–235 (SPFG). 2 stretches are compositionally biased toward polar residues: residues 237 to 252 (FGTNSNNKSPFSNLQS) and 260 to 285 (PFGTTTSKANNNNNVGSSAFGTTNNQ). 2 SXFG repeats span residues 259–262 (SPFG) and 277–280 (SAFG). The stretch at 296–297 (FG) is one FG 3 repeat. Residue Ser-298 is modified to Phosphoserine. An SXFG 9 repeat occupies 312 to 315 (SSFG). FG repeat units lie at residues 319–322 (FSFG), 339–340 (FG), and 361–364 (FGFG). Positions 319–346 (FSFGITPQNDANKVSQSNPSFGQTMPNT) are disordered. Residues 323–346 (ITPQNDANKVSQSNPSFGQTMPNT) are compositionally biased toward polar residues. The tract at residues 365–430 (QQQMNATNVN…DIPPPPALVA (66 aa)) is interaction with GLE1.

In terms of assembly, component of the nuclear pore complex (NPC). NPC constitutes the exclusive means of nucleocytoplasmic transport. NPCs allow the passive diffusion of ions and small molecules and the active, nuclear transport receptor-mediated bidirectional transport of macromolecules such as proteins, RNAs, ribonucleoparticles (RNPs), and ribosomal subunits across the nuclear envelope. Due to its 8-fold rotational symmetry, all subunits are present with 8 copies or multiples thereof. NUP42 interacts with the NUP82 subcomplex. It interacts directly with GLE1, and through its FG repeats with GFD1, the heterodimeric mRNA transport factor MEX67/MTR2, and the karyopherin CRM1.

It is found in the nucleus. Its subcellular location is the nuclear pore complex. The protein resides in the nucleus membrane. Functionally, functions as a component of the nuclear pore complex (NPC). NPC components, collectively referred to as nucleoporins (NUPs), can play the role of both NPC structural components and of docking or interaction partners for transiently associated nuclear transport factors. Active directional transport is assured by both, a Phe-Gly (FG) repeat affinity gradient for these transport factors across the NPC and a transport cofactor concentration gradient across the nuclear envelope (GSP1 and GSP2 GTPases associated predominantly with GTP in the nucleus, with GDP in the cytoplasm). NUP42 is specifically important for nuclear protein and mRNA export. This chain is Nucleoporin NUP42 (NUP42), found in Saccharomyces cerevisiae (strain ATCC 204508 / S288c) (Baker's yeast).